The sequence spans 961 residues: DNA replication licensing factor MCM2 (961 aa).

The span at 1–17 (MDDSENNAPSTPGSPGF) shows a compositional bias: polar residues. Disordered stretches follow at residues 1-81 (MDDS…FNDN) and 120-220 (AEAE…EEDE). The span at 39–78 (SDDDDDDVVGAEEAEVDPNVLPEDDGVVAAEEEEDGEDLF) shows a compositional bias: acidic residues. Basic and acidic residues-rich tracts occupy residues 120 to 146 (AEAE…LHDQ) and 166 to 176 (PPREPRTPRSD). The span at 205–220 (QTDDDPYEDEFDEEDE) shows a compositional bias: acidic residues. A C4-type zinc finger spans residues 380–406 (CSKCGTVLGPFFQNSYTEVKVGSCPEC). An MCM domain is found at 524–730 (IGERIVKSIA…FTDEMLARFV (207 aa)). 574-581 (GDPGTAKS) provides a ligand contact to ATP. The Arginine finger motif lies at 706-709 (SRFD).

The protein belongs to the MCM family. As to quaternary structure, component of the minichromosome maintenance (MCM) complex, a heterotetramer composed of MCM2, MCM3, MCM4, MCM5, MCM6 and MCM7.

The protein localises to the nucleus. It catalyses the reaction ATP + H2O = ADP + phosphate + H(+). Functionally, probable component of the MCM2-7 complex (MCM complex) that may function as a DNA helicase and which is essential to undergo a single round of replication initiation and elongation per cell cycle in eukaryotic cells. This is DNA replication licensing factor MCM2 from Oryza sativa subsp. indica (Rice).